The following is a 284-amino-acid chain: Tropomyosin, smooth muscle/fibroblast CTM1 (284 aa).

Residues M1–L284 are a coiled coil. The tract at residues A18–G38 is disordered.

The protein belongs to the tropomyosin family. Homodimer. As to expression, predominantly expressed in body wall muscle and heart, low in intestine, ovary and larval tail muscle.

Functionally, the function of tropomyosin in smooth muscle and non-muscle cells is not clear. The chain is Tropomyosin, smooth muscle/fibroblast CTM1 (CTM1) from Ciona intestinalis (Transparent sea squirt).